Reading from the N-terminus, the 554-residue chain is 5'-AMP-activated protein kinase catalytic subunit alpha-1 (554 aa).

The 253-residue stretch at 22–274 (YILGDTLGVG…IKDIREHEWF (253 aa)) folds into the Protein kinase domain. T27 is modified (phosphothreonine). ATP is bound by residues 28-36 (LGVGTFGKV) and K51. D145 serves as the catalytic Proton acceptor. Position 178 is a phosphothreonine; by LKB1 and CaMKK2 (T178). T264 and T350 each carry phosphothreonine. The tract at residues 297–376 (EALKEVCEKF…PERVPFLVAE (80 aa)) is AIS. Residue S351 is modified to Phosphoserine. Phosphoserine; by ULK1 is present on S355. T363 is modified (phosphothreonine; by ULK1). T377 bears the Phosphothreonine mark. The residue at position 392 (S392) is a Phosphoserine; by ULK1. Position 462 is a phosphoserine (S462). Residues 480–500 (KSGTATPQRSGSVSNYRSCQR) show a composition bias toward polar residues. The tract at residues 480 to 531 (KSGTATPQRSGSVSNYRSCQRSDSDAEAQGKSSEVSLTSSVTSLDSSPVDLT) is disordered. Phosphoserine; by ULK1 is present on S481. Phosphothreonine; by ULK1 is present on T483. The residue at position 485 (T485) is a Phosphothreonine. Phosphoserine is present on residues S491, S503, S519, and S522. The span at 511–530 (SSEVSLTSSVTSLDSSPVDL) shows a compositional bias: low complexity.

Belongs to the protein kinase superfamily. CAMK Ser/Thr protein kinase family. SNF1 subfamily. AMPK is a heterotrimer of an alpha catalytic subunit (PRKAA1 or PRKAA2), a beta (PRKAB1 or PRKAB2) and a gamma non-catalytic subunits (PRKAG1, PRKAG2 or PRKAG3). Interacts with FNIP1 and FNIP2. The cofactor is Mg(2+). In terms of processing, ubiquitinated. Phosphorylated at Thr-183 by STK11/LKB1 in complex with STE20-related adapter-alpha (STRADA) pseudo kinase and CAB39. Also phosphorylated at Thr-183 by CAMKK2; triggered by a rise in intracellular calcium ions, without detectable changes in the AMP/ATP ratio. CAMKK1 can also phosphorylate Thr-183, but at a much lower level. Dephosphorylated by protein phosphatase 2A and 2C (PP2A and PP2C). Phosphorylated by ULK1 and ULK2; leading to negatively regulate AMPK activity and suggesting the existence of a regulatory feedback loop between ULK1, ULK2 and AMPK. Dephosphorylated by PPM1A and PPM1B. Post-translationally, glycosylated; O-GlcNAcylated by OGT, promoting the AMP-activated protein kinase (AMPK) activity.

It localises to the cytoplasm. The protein localises to the nucleus. The catalysed reaction is L-seryl-[protein] + ATP = O-phospho-L-seryl-[protein] + ADP + H(+). It catalyses the reaction L-threonyl-[protein] + ATP = O-phospho-L-threonyl-[protein] + ADP + H(+). The enzyme catalyses L-seryl-[acetyl-CoA carboxylase] + ATP = O-phospho-L-seryl-[acetyl-CoA carboxylase] + ADP + H(+). It carries out the reaction L-seryl-[3-hydroxy-3-methylglutaryl-coenzyme A reductase] + ATP = O-phospho-L-seryl-[3-hydroxy-3-methylglutaryl-coenzyme A reductase] + ADP + H(+). The catalysed reaction is L-seryl-[tau protein] + ATP = O-phospho-L-seryl-[tau protein] + ADP + H(+). It catalyses the reaction L-threonyl-[tau protein] + ATP = O-phospho-L-threonyl-[tau protein] + ADP + H(+). With respect to regulation, activated by phosphorylation on Thr-183. Binding of AMP to non-catalytic gamma subunit (PRKAG1, PRKAG2 or PRKAG3) results in allosteric activation, inducing phosphorylation on Thr-183. AMP-binding to gamma subunit also sustains activity by preventing dephosphorylation of Thr-183. ADP also stimulates Thr-183 phosphorylation, without stimulating already phosphorylated AMPK. ATP promotes dephosphorylation of Thr-183, rendering the enzyme inactive. Under physiological conditions AMPK mainly exists in its inactive form in complex with ATP, which is much more abundant than AMP. Selectively inhibited by compound C (6-[4-(2-Piperidin-1-yl-ethoxy)-phenyl)]-3-pyridin-4-yl-pyyrazolo[1,5-a] pyrimidine. Activated by resveratrol, a natural polyphenol present in red wine, and S17834, a synthetic polyphenol. In terms of biological role, catalytic subunit of AMP-activated protein kinase (AMPK), an energy sensor protein kinase that plays a key role in regulating cellular energy metabolism. In response to reduction of intracellular ATP levels, AMPK activates energy-producing pathways and inhibits energy-consuming processes: inhibits protein, carbohydrate and lipid biosynthesis, as well as cell growth and proliferation. AMPK acts via direct phosphorylation of metabolic enzymes, and by longer-term effects via phosphorylation of transcription regulators. Regulates lipid synthesis by phosphorylating and inactivating lipid metabolic enzymes such as ACACA, ACACB, GYS1, HMGCR and LIPE; regulates fatty acid and cholesterol synthesis by phosphorylating acetyl-CoA carboxylase (ACACA and ACACB) and hormone-sensitive lipase (LIPE) enzymes, respectively. Promotes lipolysis of lipid droplets by mediating phosphorylation of isoform 1 of CHKA (CHKalpha2). Regulates insulin-signaling and glycolysis by phosphorylating IRS1, PFKFB2 and PFKFB3. AMPK stimulates glucose uptake in muscle by increasing the translocation of the glucose transporter SLC2A4/GLUT4 to the plasma membrane, possibly by mediating phosphorylation of TBC1D4/AS160. Regulates transcription and chromatin structure by phosphorylating transcription regulators involved in energy metabolism such as CRTC2/TORC2, FOXO3, histone H2B, HDAC5, MEF2C, MLXIPL/ChREBP, EP300, HNF4A, p53/TP53, SREBF1, SREBF2 and PPARGC1A. Acts as a key regulator of glucose homeostasis in liver by phosphorylating CRTC2/TORC2, leading to CRTC2/TORC2 sequestration in the cytoplasm. In response to stress, phosphorylates 'Ser-36' of histone H2B (H2BS36ph), leading to promote transcription. Acts as a key regulator of cell growth and proliferation by phosphorylating FNIP1, TSC2, RPTOR, WDR24 and ATG1/ULK1: in response to nutrient limitation, negatively regulates the mTORC1 complex by phosphorylating RPTOR component of the mTORC1 complex and by phosphorylating and activating TSC2. Also phosphorylates and inhibits GATOR2 subunit WDR24 in response to nutrient limitation, leading to suppress glucose-mediated mTORC1 activation. In response to energetic stress, phosphorylates FNIP1, inactivating the non-canonical mTORC1 signaling, thereby promoting nuclear translocation of TFEB and TFE3, and inducing transcription of lysosomal or autophagy genes. In response to nutrient limitation, promotes autophagy by phosphorylating and activating ATG1/ULK1. In that process also activates WDR45/WIPI4. Phosphorylates CASP6, thereby preventing its autoprocessing and subsequent activation. In response to nutrient limitation, phosphorylates transcription factor FOXO3 promoting FOXO3 mitochondrial import. Also acts as a regulator of cellular polarity by remodeling the actin cytoskeleton; probably by indirectly activating myosin. AMPK also acts as a regulator of circadian rhythm by mediating phosphorylation of CRY1, leading to destabilize it. May regulate the Wnt signaling pathway by phosphorylating CTNNB1, leading to stabilize it. Also has tau-protein kinase activity: in response to amyloid beta A4 protein (APP) exposure, activated by CAMKK2, leading to phosphorylation of MAPT/TAU; however the relevance of such data remains unclear in vivo. Also phosphorylates CFTR, EEF2K, KLC1, NOS3 and SLC12A1. Regulates hepatic lipogenesis. Activated via SIRT3, represses sterol regulatory element-binding protein (SREBP) transcriptional activities and ATP-consuming lipogenesis to restore cellular energy balance. Upon stress, regulates mitochondrial fragmentation through phosphorylation of MTFR1L. This is 5'-AMP-activated protein kinase catalytic subunit alpha-1 (PRKAA1) from Pongo abelii (Sumatran orangutan).